A 104-amino-acid chain; its full sequence is Large ribosomal subunit protein uL24 (104 aa).

It belongs to the universal ribosomal protein uL24 family. Part of the 50S ribosomal subunit.

Its function is as follows. One of two assembly initiator proteins, it binds directly to the 5'-end of the 23S rRNA, where it nucleates assembly of the 50S subunit. One of the proteins that surrounds the polypeptide exit tunnel on the outside of the subunit. This Psychromonas ingrahamii (strain DSM 17664 / CCUG 51855 / 37) protein is Large ribosomal subunit protein uL24.